Reading from the N-terminus, the 172-residue chain is Capsid protein (172 aa).

The disordered stretch occupies residues 1–26; that stretch reads MASKWNWSGTKGRRTPRRPYGRPYKS. Residues 11 to 20 show a composition bias toward basic residues; it reads KGRRTPRRPY.

This sequence belongs to the nanoviridae capsid protein family.

The protein localises to the virion. This Faba bean necrotic yellows virus (isolate Egyptian EV1-93) (FBNYV) protein is Capsid protein (DNA-S).